Here is a 296-residue protein sequence, read N- to C-terminus: Pantothenate synthetase (296 aa).

An ATP-binding site is contributed by 31–38; sequence MGYLHEGH. His38 (proton donor) is an active-site residue. Gln62 contacts (R)-pantoate. Gln62 is a beta-alanine binding site. 148–151 is an ATP binding site; the sequence is GEKD. Gln154 is a binding site for (R)-pantoate. Residues Val177 and 185–188 contribute to the ATP site; that span reads LSSR.

The protein belongs to the pantothenate synthetase family. In terms of assembly, homodimer.

The protein resides in the cytoplasm. The enzyme catalyses (R)-pantoate + beta-alanine + ATP = (R)-pantothenate + AMP + diphosphate + H(+). It participates in cofactor biosynthesis; (R)-pantothenate biosynthesis; (R)-pantothenate from (R)-pantoate and beta-alanine: step 1/1. Functionally, catalyzes the condensation of pantoate with beta-alanine in an ATP-dependent reaction via a pantoyl-adenylate intermediate. The sequence is that of Pantothenate synthetase from Deinococcus geothermalis (strain DSM 11300 / CIP 105573 / AG-3a).